Consider the following 109-residue polypeptide: Ribulose bisphosphate carboxylase small subunit (109 aa).

It belongs to the RuBisCO small chain family. As to quaternary structure, heterohexadecamer of 8 large and 8 small subunits. Forms complexes of many stoichiometries with Raf1 and RbcL.

It localises to the carboxysome. Its function is as follows. RuBisCO catalyzes two reactions: the carboxylation of D-ribulose 1,5-bisphosphate, the primary event in carbon dioxide fixation, as well as the oxidative fragmentation of the pentose substrate in the photorespiration process. Both reactions occur simultaneously and in competition at the same active site. Although the small subunit is not catalytic it is essential for maximal activity. The chain is Ribulose bisphosphate carboxylase small subunit from Nostoc sp. (strain PCC 7120 / SAG 25.82 / UTEX 2576).